A 221-amino-acid chain; its full sequence is Thiamine-phosphate synthase (221 aa).

Residues 47–51 (QYREK) and Asn79 each bind 4-amino-2-methyl-5-(diphosphooxymethyl)pyrimidine. The Mg(2+) site is built by Asp80 and Asp99. Thr118 lines the 4-amino-2-methyl-5-(diphosphooxymethyl)pyrimidine pocket. 144-146 (SFT) contacts 2-[(2R,5Z)-2-carboxy-4-methylthiazol-5(2H)-ylidene]ethyl phosphate. Lys147 is a 4-amino-2-methyl-5-(diphosphooxymethyl)pyrimidine binding site. 2-[(2R,5Z)-2-carboxy-4-methylthiazol-5(2H)-ylidene]ethyl phosphate is bound by residues Gly175 and 195 to 196 (VT).

The protein belongs to the thiamine-phosphate synthase family. The cofactor is Mg(2+).

The enzyme catalyses 2-[(2R,5Z)-2-carboxy-4-methylthiazol-5(2H)-ylidene]ethyl phosphate + 4-amino-2-methyl-5-(diphosphooxymethyl)pyrimidine + 2 H(+) = thiamine phosphate + CO2 + diphosphate. The catalysed reaction is 2-(2-carboxy-4-methylthiazol-5-yl)ethyl phosphate + 4-amino-2-methyl-5-(diphosphooxymethyl)pyrimidine + 2 H(+) = thiamine phosphate + CO2 + diphosphate. It carries out the reaction 4-methyl-5-(2-phosphooxyethyl)-thiazole + 4-amino-2-methyl-5-(diphosphooxymethyl)pyrimidine + H(+) = thiamine phosphate + diphosphate. It functions in the pathway cofactor biosynthesis; thiamine diphosphate biosynthesis; thiamine phosphate from 4-amino-2-methyl-5-diphosphomethylpyrimidine and 4-methyl-5-(2-phosphoethyl)-thiazole: step 1/1. Its function is as follows. Condenses 4-methyl-5-(beta-hydroxyethyl)thiazole monophosphate (THZ-P) and 2-methyl-4-amino-5-hydroxymethyl pyrimidine pyrophosphate (HMP-PP) to form thiamine monophosphate (TMP). The protein is Thiamine-phosphate synthase of Caldicellulosiruptor saccharolyticus (strain ATCC 43494 / DSM 8903 / Tp8T 6331).